The sequence spans 147 residues: Mineralocorticoid receptor (147 aa).

One can recognise an NR LBD domain in the interval 1-147; sequence FALSWRSYKH…SQALKVEFPA (147 aa). Residues R6 and T134 each coordinate 21-hydroxyprogesterone. Residues R6 and T134 each contribute to the aldosterone site. Residues R6 and T134 each contribute to the progesterone site.

The protein belongs to the nuclear hormone receptor family. NR3 subfamily.

Its subcellular location is the cytoplasm. It is found in the nucleus. In terms of biological role, receptor for both mineralocorticoids (MC) such as aldosterone and glucocorticoids (GC) such as corticosterone or cortisol. Binds to mineralocorticoid response elements (MRE) and transactivates target genes. The effect of MC is to increase ion and water transport and thus raise extracellular fluid volume and blood pressure and lower potassium levels. The sequence is that of Mineralocorticoid receptor (NR3C2) from Gallus gallus (Chicken).